The following is a 130-amino-acid chain: Small ribosomal subunit protein uS9 (130 aa).

This sequence belongs to the universal ribosomal protein uS9 family.

The protein is Small ribosomal subunit protein uS9 of Bordetella pertussis (strain Tohama I / ATCC BAA-589 / NCTC 13251).